Here is a 145-residue protein sequence, read N- to C-terminus: Superoxide dismutase [Mn/Fe] (145 aa).

The Fe(3+) site is built by H10 and H64. Mn(2+) contacts are provided by H10 and H64.

Belongs to the iron/manganese superoxide dismutase family. Mn(2+) is required as a cofactor. Fe(3+) serves as cofactor.

The enzyme catalyses 2 superoxide + 2 H(+) = H2O2 + O2. Functionally, destroys superoxide anion radicals which are normally produced within the cells and which are toxic to biological systems. Catalyzes the dismutation of superoxide anion radicals into O2 and H2O2 by successive reduction and oxidation of the transition metal ion at the active site. This chain is Superoxide dismutase [Mn/Fe] (sodA), found in Streptococcus porcinus.